A 213-amino-acid polypeptide reads, in one-letter code: Thiamine-phosphate synthase (213 aa).

Residues 43-47 (QLRDK) and asparagine 74 contribute to the 4-amino-2-methyl-5-(diphosphooxymethyl)pyrimidine site. Residues aspartate 75 and aspartate 94 each contribute to the Mg(2+) site. Serine 113 serves as a coordination point for 4-amino-2-methyl-5-(diphosphooxymethyl)pyrimidine. A 2-[(2R,5Z)-2-carboxy-4-methylthiazol-5(2H)-ylidene]ethyl phosphate-binding site is contributed by 142-144 (TAT). Lysine 145 provides a ligand contact to 4-amino-2-methyl-5-(diphosphooxymethyl)pyrimidine. 2-[(2R,5Z)-2-carboxy-4-methylthiazol-5(2H)-ylidene]ethyl phosphate is bound by residues glycine 173 and 193-194 (VS).

This sequence belongs to the thiamine-phosphate synthase family. Requires Mg(2+) as cofactor.

It carries out the reaction 2-[(2R,5Z)-2-carboxy-4-methylthiazol-5(2H)-ylidene]ethyl phosphate + 4-amino-2-methyl-5-(diphosphooxymethyl)pyrimidine + 2 H(+) = thiamine phosphate + CO2 + diphosphate. The catalysed reaction is 2-(2-carboxy-4-methylthiazol-5-yl)ethyl phosphate + 4-amino-2-methyl-5-(diphosphooxymethyl)pyrimidine + 2 H(+) = thiamine phosphate + CO2 + diphosphate. It catalyses the reaction 4-methyl-5-(2-phosphooxyethyl)-thiazole + 4-amino-2-methyl-5-(diphosphooxymethyl)pyrimidine + H(+) = thiamine phosphate + diphosphate. It participates in cofactor biosynthesis; thiamine diphosphate biosynthesis; thiamine phosphate from 4-amino-2-methyl-5-diphosphomethylpyrimidine and 4-methyl-5-(2-phosphoethyl)-thiazole: step 1/1. Functionally, condenses 4-methyl-5-(beta-hydroxyethyl)thiazole monophosphate (THZ-P) and 2-methyl-4-amino-5-hydroxymethyl pyrimidine pyrophosphate (HMP-PP) to form thiamine monophosphate (TMP). This chain is Thiamine-phosphate synthase, found in Psychrobacter sp. (strain PRwf-1).